Here is a 133-residue protein sequence, read N- to C-terminus: Transmembrane protein 60 (133 aa).

4 helical membrane passes run 5-25 (LAQR…MLVL), 35-55 (WFLI…LLIV), 78-98 (AWYL…CAKL), and 110-130 (FIPL…NVFF).

Its subcellular location is the membrane. In Homo sapiens (Human), this protein is Transmembrane protein 60 (TMEM60).